A 417-amino-acid polypeptide reads, in one-letter code: NADH-quinone oxidoreductase subunit D (417 aa).

Belongs to the complex I 49 kDa subunit family. As to quaternary structure, NDH-1 is composed of 14 different subunits. Subunits NuoB, C, D, E, F, and G constitute the peripheral sector of the complex.

Its subcellular location is the cell inner membrane. It carries out the reaction a quinone + NADH + 5 H(+)(in) = a quinol + NAD(+) + 4 H(+)(out). In terms of biological role, NDH-1 shuttles electrons from NADH, via FMN and iron-sulfur (Fe-S) centers, to quinones in the respiratory chain. The immediate electron acceptor for the enzyme in this species is believed to be ubiquinone. Couples the redox reaction to proton translocation (for every two electrons transferred, four hydrogen ions are translocated across the cytoplasmic membrane), and thus conserves the redox energy in a proton gradient. This chain is NADH-quinone oxidoreductase subunit D, found in Cupriavidus metallidurans (strain ATCC 43123 / DSM 2839 / NBRC 102507 / CH34) (Ralstonia metallidurans).